The chain runs to 499 residues: Glutamate--tRNA ligase (499 aa).

The short motif at 12 to 22 is the 'HIGH' region element; sequence PSPTGHLHIGN. The short motif at 259-263 is the 'KMSKS' region element; sequence KLSKR. ATP is bound at residue Lys-262.

This sequence belongs to the class-I aminoacyl-tRNA synthetase family. Glutamate--tRNA ligase type 1 subfamily. Monomer.

Its subcellular location is the cytoplasm. The enzyme catalyses tRNA(Glu) + L-glutamate + ATP = L-glutamyl-tRNA(Glu) + AMP + diphosphate. Catalyzes the attachment of glutamate to tRNA(Glu) in a two-step reaction: glutamate is first activated by ATP to form Glu-AMP and then transferred to the acceptor end of tRNA(Glu). The sequence is that of Glutamate--tRNA ligase from Lactobacillus gasseri (strain ATCC 33323 / DSM 20243 / BCRC 14619 / CIP 102991 / JCM 1131 / KCTC 3163 / NCIMB 11718 / NCTC 13722 / AM63).